The sequence spans 421 residues: Gamma-glutamyl phosphate reductase (421 aa).

It belongs to the gamma-glutamyl phosphate reductase family.

The protein localises to the cytoplasm. It catalyses the reaction L-glutamate 5-semialdehyde + phosphate + NADP(+) = L-glutamyl 5-phosphate + NADPH + H(+). It functions in the pathway amino-acid biosynthesis; L-proline biosynthesis; L-glutamate 5-semialdehyde from L-glutamate: step 2/2. Functionally, catalyzes the NADPH-dependent reduction of L-glutamate 5-phosphate into L-glutamate 5-semialdehyde and phosphate. The product spontaneously undergoes cyclization to form 1-pyrroline-5-carboxylate. The chain is Gamma-glutamyl phosphate reductase from Bordetella petrii (strain ATCC BAA-461 / DSM 12804 / CCUG 43448).